We begin with the raw amino-acid sequence, 98 residues long: NADH-ubiquinone oxidoreductase chain 4L (98 aa).

Transmembrane regions (helical) follow at residues 1–21 (MTLIHMNILMAFSMSLVGLLM), 29–49 (ALLCLEGMMLSLFVLAALTIL), and 61–81 (IILLVFAACEAAIGLALLVMV).

It belongs to the complex I subunit 4L family. As to quaternary structure, core subunit of respiratory chain NADH dehydrogenase (Complex I) which is composed of 45 different subunits.

It is found in the mitochondrion inner membrane. It carries out the reaction a ubiquinone + NADH + 5 H(+)(in) = a ubiquinol + NAD(+) + 4 H(+)(out). Its function is as follows. Core subunit of the mitochondrial membrane respiratory chain NADH dehydrogenase (Complex I) which catalyzes electron transfer from NADH through the respiratory chain, using ubiquinone as an electron acceptor. Part of the enzyme membrane arm which is embedded in the lipid bilayer and involved in proton translocation. The polypeptide is NADH-ubiquinone oxidoreductase chain 4L (MT-ND4L) (Eschrichtius robustus (California gray whale)).